The primary structure comprises 298 residues: MPMQKEFRTSAYHSRFQTPFRRRQEGKTDYYQRKRLVTQHKAKYNSPKYRLVVRFTNKDIIAQIVSAHITGDVVFTAAYAHELPRYGIKYGLTNWSAAYAVGLLVARRALQKLGLDETYTGVEEVEGEFELTEAVEDGPRPFKVFLDIGLQRTTTGARVFGVLKGASDGGLYVPHSPNRFPGWDIEAEELDAELLRKYIFGGHVAEYMEELLDDDEEKYKSIFKNYIEEEIESEDVEEIYANAHEAIRADPSFKPTEKKFTKEQYKAESKKYRQQKLTRAERQAKVAKKIAEFKAQQE.

This sequence belongs to the universal ribosomal protein uL18 family. Component of the large ribosomal subunit. Mature ribosomes consist of a small (40S) and a large (60S) subunit. The 40S subunit contains about 32 different proteins and 1 molecule of RNA (18S). The 60S subunit contains 45 different proteins and 3 molecules of RNA (25S, 5.8S and 5S).

Its subcellular location is the cytoplasm. In terms of biological role, component of the ribosome, a large ribonucleoprotein complex responsible for the synthesis of proteins in the cell. The small ribosomal subunit (SSU) binds messenger RNAs (mRNAs) and translates the encoded message by selecting cognate aminoacyl-transfer RNA (tRNA) molecules. The large subunit (LSU) contains the ribosomal catalytic site termed the peptidyl transferase center (PTC), which catalyzes the formation of peptide bonds, thereby polymerizing the amino acids delivered by tRNAs into a polypeptide chain. The nascent polypeptides leave the ribosome through a tunnel in the LSU and interact with protein factors that function in enzymatic processing, targeting, and the membrane insertion of nascent chains at the exit of the ribosomal tunnel. This Candida albicans (strain SC5314 / ATCC MYA-2876) (Yeast) protein is Large ribosomal subunit protein uL18.